The primary structure comprises 593 residues: 2-succinyl-5-enolpyruvyl-6-hydroxy-3-cyclohexene-1-carboxylate synthase (593 aa).

The protein belongs to the TPP enzyme family. MenD subfamily. In terms of assembly, homodimer. The cofactor is Mg(2+). Mn(2+) serves as cofactor. Thiamine diphosphate is required as a cofactor.

It carries out the reaction isochorismate + 2-oxoglutarate + H(+) = 5-enolpyruvoyl-6-hydroxy-2-succinyl-cyclohex-3-ene-1-carboxylate + CO2. Its pathway is quinol/quinone metabolism; 1,4-dihydroxy-2-naphthoate biosynthesis; 1,4-dihydroxy-2-naphthoate from chorismate: step 2/7. It participates in quinol/quinone metabolism; menaquinone biosynthesis. Catalyzes the thiamine diphosphate-dependent decarboxylation of 2-oxoglutarate and the subsequent addition of the resulting succinic semialdehyde-thiamine pyrophosphate anion to isochorismate to yield 2-succinyl-5-enolpyruvyl-6-hydroxy-3-cyclohexene-1-carboxylate (SEPHCHC). The polypeptide is 2-succinyl-5-enolpyruvyl-6-hydroxy-3-cyclohexene-1-carboxylate synthase (Pelodictyon phaeoclathratiforme (strain DSM 5477 / BU-1)).